Consider the following 166-residue polypeptide: Transcription antitermination protein NusB (166 aa).

Basic and acidic residues predominate over residues 1–15 (MISDDSDRFNPRDPK). The interval 1–30 (MISDDSDRFNPRDPKPANAGKPSKSAKRRE) is disordered.

Belongs to the NusB family.

Functionally, involved in transcription antitermination. Required for transcription of ribosomal RNA (rRNA) genes. Binds specifically to the boxA antiterminator sequence of the ribosomal RNA (rrn) operons. The polypeptide is Transcription antitermination protein NusB (Pseudomonas fluorescens (strain ATCC BAA-477 / NRRL B-23932 / Pf-5)).